Reading from the N-terminus, the 380-residue chain is Peroxisomal membrane protein PEX13 (380 aa).

Positions 1–30 are disordered; the sequence is MSDSSAPDLPSKPSSLNAGQSSSLQTTNTG. At 1-230 the chain is on the lumenal side; it reads MSDSSAPDLP…NKNTNKLSLK (230 aa). Positions 12-30 are enriched in polar residues; sequence KPSSLNAGQSSSLQTTNTG. A helical membrane pass occupies residues 231 to 251; the sequence is PLLLFLAAVVGFPYLLKKLIA. Residues 252–380 are Cytoplasmic-facing; sequence HLAETSQMNG…DSTEFQKMKT (129 aa). Residues 277-344 enclose the SH3 domain; it reads TKLEFARALY…PYNYVEIIER (68 aa).

This sequence belongs to the peroxin-13 family. In terms of assembly, interacts (via SH3 domain) with PEX14 (via SH3-binding motif); forming the PEX13-PEX14 docking complex.

The protein resides in the peroxisome membrane. Functionally, component of the PEX13-PEX14 docking complex, a translocon channel that specifically mediates the import of peroxisomal cargo proteins bound to PEX5 receptor. The PEX13-PEX14 docking complex forms a large import pore which can be opened to a diameter of about 9 nm. Mechanistically, PEX5 receptor along with cargo proteins associates with the PEX14 subunit of the PEX13-PEX14 docking complex in the cytosol, leading to the insertion of the receptor into the organelle membrane with the concomitant translocation of the cargo into the peroxisome matrix. This chain is Peroxisomal membrane protein PEX13 (PEX13), found in Komagataella pastoris (Yeast).